The primary structure comprises 514 residues: 2-isopropylmalate synthase (514 aa).

In terms of domain architecture, Pyruvate carboxyltransferase spans 8–270; sequence IRIFDTTLRD…DCGVVTEQLF (263 aa). The Mn(2+) site is built by Asp17, His205, His207, and Asn241. Residues 394-514 form a regulatory domain region; that stretch reads RLVNLSVQCS…KEEEQEKEGI (121 aa).

Belongs to the alpha-IPM synthase/homocitrate synthase family. LeuA type 1 subfamily. Homodimer. The cofactor is Mn(2+).

Its subcellular location is the cytoplasm. It catalyses the reaction 3-methyl-2-oxobutanoate + acetyl-CoA + H2O = (2S)-2-isopropylmalate + CoA + H(+). Its pathway is amino-acid biosynthesis; L-leucine biosynthesis; L-leucine from 3-methyl-2-oxobutanoate: step 1/4. Its function is as follows. Catalyzes the condensation of the acetyl group of acetyl-CoA with 3-methyl-2-oxobutanoate (2-ketoisovalerate) to form 3-carboxy-3-hydroxy-4-methylpentanoate (2-isopropylmalate). The chain is 2-isopropylmalate synthase from Nitratidesulfovibrio vulgaris (strain DSM 19637 / Miyazaki F) (Desulfovibrio vulgaris).